The sequence spans 154 residues: Nuclear cap-binding protein subunit 2 (154 aa).

MRNA is bound by residues tyrosine 10, tyrosine 33, 102 to 106 (RVDWD), 113 to 117 (RQYGR), and 123 to 124 (QV). The 79-residue stretch at 30-108 (CTLYVGNLSF…RLIRVDWDAG (79 aa)) folds into the RRM domain.

Belongs to the RRM NCBP2 family. In terms of assembly, component of the nuclear cap-binding complex (CBC), a heterodimer composed of Cbp80 and Cbp20 that interacts with m7GpppG-capped RNA. Interacts with Ars2.

The protein localises to the nucleus. Functionally, component of the cap-binding complex (CBC), which binds co-transcriptionally to the 5' cap of pre-mRNAs and is involved in various processes such as pre-mRNA splicing and RNA-mediated gene silencing (RNAi). The CBC complex is involved in miRNA-mediated RNA interference via its interaction with Ars2 and is required for primary microRNAs (miRNAs) processing. Also involved in innate immunity via the short interfering RNAs (siRNAs) processing machinery by restricting the viral RNA production. In the CBC complex, Cbp20 recognizes and binds capped RNAs (m7GpppG-capped RNA) but requires Cbp80 to stabilize the movement of its N-terminal loop and lock the CBC into a high affinity cap-binding state with the cap structure. In Drosophila yakuba (Fruit fly), this protein is Nuclear cap-binding protein subunit 2 (Cbp20).